Here is a 376-residue protein sequence, read N- to C-terminus: Zinc transporter 7 (376 aa).

At 1–37 the chain is on the cytoplasmic side; it reads MLPLSIKDDEYKPPKFNLFGKISGWFRSILSDKTSRN. A helical membrane pass occupies residues 38-58; sequence LFFFLCLNLSFAFVELLYGIW. Over 59–67 the chain is Lumenal; that stretch reads SNCLGLISD. A helical membrane pass occupies residues 68–88; it reads SFHMFFDSTAILAGLAASVIS. At 89-102 the chain is on the cytoplasmic side; it reads KWRDNDAFSYGYVR. The helical transmembrane segment at 103 to 123 threads the bilayer; sequence AEVLAGFVNGLFLIFTAFFIF. Over 124–140 the chain is Lumenal; that stretch reads SEGVERALAPPDVHHER. A helical transmembrane segment spans residues 141 to 161; the sequence is LLLVSILGFVVNLIGIFVFKH. The his-rich loop stretch occupies residues 161–218; it reads HGGHGHSHGSGHGHSHSLFNGALDQAHGHVDHCHSHEVKHGAAHSHDHAHGHGHFHSH. Over 162 to 236 the chain is Cytoplasmic; the sequence is GGHGHSHGSG…TGPSRQILQG (75 aa). Positions 194-222 are enriched in basic and acidic residues; that stretch reads HSHEVKHGAAHSHDHAHGHGHFHSHDGPS. Positions 194–226 are disordered; the sequence is HSHEVKHGAAHSHDHAHGHGHFHSHDGPSLKET. Residues 237–257 form a helical membrane-spanning segment; sequence VFLHILADTLGSIGVIASAIM. The Lumenal portion of the chain corresponds to 258 to 262; it reads MQNFG. The chain crosses the membrane as a helical span at residues 263-283; that stretch reads LMIADPICSILIAILIVVSVI. Topologically, residues 284–376 are cytoplasmic; that stretch reads PLLRESVGIL…LYVQIDFAAM (93 aa).

Belongs to the cation diffusion facilitator (CDF) transporter (TC 2.A.4) family. SLC30A subfamily. As to quaternary structure, homooligomer. In terms of tissue distribution, highly expressed in megakaryocytes and other bone marrow cells and in the epithelium of the small intestine. Expressed in testis (in Leydig cells), adrenal gland (in adrenal medula, zona fasciculata and zona of reticularis), and pituitary gland (in somatotropic cells).

It is found in the golgi apparatus membrane. It localises to the cytoplasmic vesicle. Its subcellular location is the golgi apparatus. The protein localises to the trans-Golgi network. The protein resides in the sarcoplasmic reticulum. It is found in the mitochondrion. It carries out the reaction Zn(2+)(in) = Zn(2+)(out). Its function is as follows. Zinc ion transporter mediating zinc entry from the cytosol into the lumen of organelles along the secretory pathway. By contributing to zinc ion homeostasis within the early secretory pathway, regulates the activation and folding of enzymes like alkaline phosphatases. This Homo sapiens (Human) protein is Zinc transporter 7.